The primary structure comprises 334 residues: DNA polymerase beta (334 aa).

Residues K60, L62, and V65 each contribute to the K(+) site. K60, L62, and V65 together coordinate Na(+). Catalysis depends on K72, which acts as the Nucleophile; Schiff-base intermediate with DNA; for 5'-dRP lyase activity. R83 is subject to Omega-N-methylarginine; by PRMT6. T101, V103, and I106 together coordinate K(+). The Na(+) site is built by T101, V103, and I106. R149 is a binding site for a 2'-deoxyribonucleoside 5'-triphosphate. R152 carries the omega-N-methylarginine; by PRMT6 modification. Residues S180, R183, G189, and D190 each coordinate a 2'-deoxyribonucleoside 5'-triphosphate. Residues 183–192 form a DNA-binding region; that stretch reads RGAESSGDMD. Residues D190, D192, and D255 each contribute to the Mg(2+) site.

Belongs to the DNA polymerase type-X family. As to quaternary structure, monomer. Mg(2+) is required as a cofactor. In terms of processing, methylation by PRMT6 stimulates the polymerase activity by enhancing DNA binding and processivity. Ubiquitinated: monoubiquitinated by huwe1/arf-bp1. Monoubiquitinated protein is then the target of stub1/chip, which catalyzes polyubiquitination from monoubiquitin, leading to degradation by the proteasome. usp47 mediates the deubiquitination of monoubiquitinated protein, preventing polyubiquitination by STUB1/CHIP and its subsequent degradation.

It is found in the nucleus. The protein localises to the cytoplasm. The catalysed reaction is DNA(n) + a 2'-deoxyribonucleoside 5'-triphosphate = DNA(n+1) + diphosphate. It carries out the reaction a 5'-end 2'-deoxyribose-2'-deoxyribonucleotide-DNA = (2E,4S)-4-hydroxypenten-2-al-5-phosphate + a 5'-end 5'-phospho-2'-deoxyribonucleoside-DNA + H(+). It catalyses the reaction 2'-deoxyribonucleotide-(2'-deoxyribose 5'-phosphate)-2'-deoxyribonucleotide-DNA = a 3'-end 2'-deoxyribonucleotide-(2,3-dehydro-2,3-deoxyribose 5'-phosphate)-DNA + a 5'-end 5'-phospho-2'-deoxyribonucleoside-DNA + H(+). Repair polymerase that plays a key role in base-excision repair. During this process, the damaged base is excised by specific DNA glycosylases, the DNA backbone is nicked at the abasic site by an apurinic/apyrimidic (AP) endonuclease, and POLB removes 5'-deoxyribose-phosphate from the preincised AP site acting as a 5'-deoxyribose-phosphate lyase (5'-dRP lyase); through its DNA polymerase activity, it adds one nucleotide to the 3' end of the arising single-nucleotide gap. Conducts 'gap-filling' DNA synthesis in a stepwise distributive fashion rather than in a processive fashion as for other DNA polymerases. It is also able to cleave sugar-phosphate bonds 3' to an intact AP site, acting as an AP lyase. The polypeptide is DNA polymerase beta (polb) (Xenopus laevis (African clawed frog)).